A 242-amino-acid chain; its full sequence is ATP synthase subunit 4, mitochondrial (242 aa).

A mitochondrion-targeting transit peptide spans 1 to 35 (MSFRALTMRSAVARTALNNTIRSARVATPYLGIRH).

This sequence belongs to the eukaryotic ATPase B chain family. F-type ATPases have 2 components, CF(1) - the catalytic core - and CF(0) - the membrane proton channel. In yeast, the dimeric form of ATP synthase consists of 17 polypeptides: alpha, beta, gamma, delta, epsilon, 4 (B), 5 (OSCP), 6 (A), 8, 9 (C), d, E (Tim11), f, g, h, i/j and k.

The protein resides in the mitochondrion. Its subcellular location is the mitochondrion inner membrane. Its function is as follows. Mitochondrial membrane ATP synthase (F(1)F(0) ATP synthase or Complex V) produces ATP from ADP in the presence of a proton gradient across the membrane which is generated by electron transport complexes of the respiratory chain. F-type ATPases consist of two structural domains, F(1) - containing the extramembraneous catalytic core, and F(0) - containing the membrane proton channel, linked together by a central stalk and a peripheral stalk. During catalysis, ATP synthesis in the catalytic domain of F(1) is coupled via a rotary mechanism of the central stalk subunits to proton translocation. Part of the complex F(0) domain and the peripheric stalk, which acts as a stator to hold the catalytic alpha(3)beta(3) subcomplex and subunit a/ATP6 static relative to the rotary elements. In Candida glabrata (strain ATCC 2001 / BCRC 20586 / JCM 3761 / NBRC 0622 / NRRL Y-65 / CBS 138) (Yeast), this protein is ATP synthase subunit 4, mitochondrial (ATP4).